We begin with the raw amino-acid sequence, 528 residues long: T-complex protein 1 subunit gamma (528 aa).

Ser-250 carries the post-translational modification Phosphoserine. Cys-364 and Cys-370 form a disulfide bridge.

Belongs to the TCP-1 chaperonin family. In terms of assembly, heterooligomeric complex of about 850 to 900 kDa that forms two stacked rings, 12 to 16 nm in diameter.

The protein localises to the cytoplasm. In terms of biological role, molecular chaperone; assists the folding of proteins upon ATP hydrolysis. Known to play a role, in vitro, in the folding of actin and tubulin. The protein is T-complex protein 1 subunit gamma (cct3) of Schizosaccharomyces pombe (strain 972 / ATCC 24843) (Fission yeast).